A 457-amino-acid chain; its full sequence is Bifunctional protein GlmU (457 aa).

The interval 1–230 (MPLSLPLHIV…PREVEGVNDL (230 aa)) is pyrophosphorylase. Residues 12 to 15 (LAAG), Lys-26, Gln-78, 83 to 84 (GT), 105 to 107 (YGD), Gly-140, Glu-155, Asn-170, and Asn-228 contribute to the UDP-N-acetyl-alpha-D-glucosamine site. Asp-107 is a Mg(2+) binding site. Asn-228 lines the Mg(2+) pocket. The interval 231–251 (WQLTQLERTWQIRAARALCLQ) is linker. The segment at 252-457 (GARVADPARL…DGWQRPKKKT (206 aa)) is N-acetyltransferase. UDP-N-acetyl-alpha-D-glucosamine-binding residues include Arg-334 and Lys-352. His-364 functions as the Proton acceptor in the catalytic mechanism. Tyr-367 and Asn-378 together coordinate UDP-N-acetyl-alpha-D-glucosamine. Acetyl-CoA contacts are provided by residues Ala-381, 387–388 (NY), Ser-406, Ala-424, and Arg-441.

The protein in the N-terminal section; belongs to the N-acetylglucosamine-1-phosphate uridyltransferase family. It in the C-terminal section; belongs to the transferase hexapeptide repeat family. As to quaternary structure, homotrimer. Mg(2+) is required as a cofactor.

It localises to the cytoplasm. The enzyme catalyses alpha-D-glucosamine 1-phosphate + acetyl-CoA = N-acetyl-alpha-D-glucosamine 1-phosphate + CoA + H(+). The catalysed reaction is N-acetyl-alpha-D-glucosamine 1-phosphate + UTP + H(+) = UDP-N-acetyl-alpha-D-glucosamine + diphosphate. The protein operates within nucleotide-sugar biosynthesis; UDP-N-acetyl-alpha-D-glucosamine biosynthesis; N-acetyl-alpha-D-glucosamine 1-phosphate from alpha-D-glucosamine 6-phosphate (route II): step 2/2. It functions in the pathway nucleotide-sugar biosynthesis; UDP-N-acetyl-alpha-D-glucosamine biosynthesis; UDP-N-acetyl-alpha-D-glucosamine from N-acetyl-alpha-D-glucosamine 1-phosphate: step 1/1. Its pathway is bacterial outer membrane biogenesis; LPS lipid A biosynthesis. In terms of biological role, catalyzes the last two sequential reactions in the de novo biosynthetic pathway for UDP-N-acetylglucosamine (UDP-GlcNAc). The C-terminal domain catalyzes the transfer of acetyl group from acetyl coenzyme A to glucosamine-1-phosphate (GlcN-1-P) to produce N-acetylglucosamine-1-phosphate (GlcNAc-1-P), which is converted into UDP-GlcNAc by the transfer of uridine 5-monophosphate (from uridine 5-triphosphate), a reaction catalyzed by the N-terminal domain. The chain is Bifunctional protein GlmU from Xylella fastidiosa (strain M12).